A 387-amino-acid chain; its full sequence is Cysteine desulfurase IscS (387 aa).

Pyridoxal 5'-phosphate is bound by residues 73 to 74 (AT), asparagine 155, glutamine 183, and 203 to 205 (SAH). N6-(pyridoxal phosphate)lysine is present on lysine 206. Threonine 241 contacts pyridoxal 5'-phosphate. The active-site Cysteine persulfide intermediate is the cysteine 328. Cysteine 328 provides a ligand contact to [2Fe-2S] cluster.

The protein belongs to the class-V pyridoxal-phosphate-dependent aminotransferase family. NifS/IscS subfamily. In terms of assembly, homodimer. Forms a heterotetramer with IscU, interacts with other sulfur acceptors. Pyridoxal 5'-phosphate serves as cofactor.

The protein localises to the cytoplasm. The enzyme catalyses (sulfur carrier)-H + L-cysteine = (sulfur carrier)-SH + L-alanine. It participates in cofactor biosynthesis; iron-sulfur cluster biosynthesis. Its function is as follows. Master enzyme that delivers sulfur to a number of partners involved in Fe-S cluster assembly, tRNA modification or cofactor biosynthesis. Catalyzes the removal of elemental sulfur atoms from cysteine to produce alanine. Functions as a sulfur delivery protein for Fe-S cluster synthesis onto IscU, an Fe-S scaffold assembly protein, as well as other S acceptor proteins. In Helicobacter pylori (strain Shi470), this protein is Cysteine desulfurase IscS.